The following is a 158-amino-acid chain: Transcription elongation factor GreA (158 aa).

Residues 8 to 74 (TKGGYNKLKD…TLERVLSTAT (67 aa)) are a coiled coil.

Belongs to the GreA/GreB family.

Functionally, necessary for efficient RNA polymerase transcription elongation past template-encoded arresting sites. The arresting sites in DNA have the property of trapping a certain fraction of elongating RNA polymerases that pass through, resulting in locked ternary complexes. Cleavage of the nascent transcript by cleavage factors such as GreA or GreB allows the resumption of elongation from the new 3'terminus. GreA releases sequences of 2 to 3 nucleotides. The chain is Transcription elongation factor GreA from Chloroherpeton thalassium (strain ATCC 35110 / GB-78).